Consider the following 382-residue polypeptide: Threonine synthase (382 aa).

Lys-93 is subject to N6-(pyridoxal phosphate)lysine. Pyridoxal 5'-phosphate-binding positions include Asn-119, 219–223 (GNAGN), and Thr-347.

This sequence belongs to the threonine synthase family. It depends on pyridoxal 5'-phosphate as a cofactor.

The catalysed reaction is O-phospho-L-homoserine + H2O = L-threonine + phosphate. The protein operates within amino-acid biosynthesis; L-threonine biosynthesis; L-threonine from L-aspartate: step 5/5. Catalyzes the gamma-elimination of phosphate from L-phosphohomoserine and the beta-addition of water to produce L-threonine. The chain is Threonine synthase (thrC) from Synechocystis sp. (strain ATCC 27184 / PCC 6803 / Kazusa).